A 129-amino-acid polypeptide reads, in one-letter code: Fluoride-specific ion channel FluC 2 (129 aa).

4 helical membrane passes run 3-23 (FLYVGIFGALGGMCRYAMNLW), 32-52 (ATLAVNLIGCFLLAFIMPFLA), 59-79 (LVLLNGIGTGFIGAFTTFSAF), and 90-110 (GEVVLAISYILVSLIGGLVMV). Residues G71 and T74 each contribute to the Na(+) site.

The protein belongs to the fluoride channel Fluc/FEX (TC 1.A.43) family.

It localises to the cell membrane. It catalyses the reaction fluoride(in) = fluoride(out). Its activity is regulated as follows. Na(+) is not transported, but it plays an essential structural role and its presence is essential for fluoride channel function. In terms of biological role, fluoride-specific ion channel. Important for reducing fluoride concentration in the cell, thus reducing its toxicity. The chain is Fluoride-specific ion channel FluC 2 from Listeria innocua serovar 6a (strain ATCC BAA-680 / CLIP 11262).